A 206-amino-acid chain; its full sequence is ATP synthase subunit b (206 aa).

The chain crosses the membrane as a helical span at residues 10–30; that stretch reads LLKPFVSTAAICLLVAGTVVL.

The protein belongs to the ATPase B chain family. In terms of assembly, F-type ATPases have 2 components, F(1) - the catalytic core - and F(0) - the membrane proton channel. F(1) has five subunits: alpha(3), beta(3), gamma(1), delta(1), epsilon(1). F(0) has three main subunits: a(1), b(2) and c(10-14). The alpha and beta chains form an alternating ring which encloses part of the gamma chain. F(1) is attached to F(0) by a central stalk formed by the gamma and epsilon chains, while a peripheral stalk is formed by the delta and b chains.

Its subcellular location is the cell inner membrane. F(1)F(0) ATP synthase produces ATP from ADP in the presence of a proton or sodium gradient. F-type ATPases consist of two structural domains, F(1) containing the extramembraneous catalytic core and F(0) containing the membrane proton channel, linked together by a central stalk and a peripheral stalk. During catalysis, ATP synthesis in the catalytic domain of F(1) is coupled via a rotary mechanism of the central stalk subunits to proton translocation. Its function is as follows. Component of the F(0) channel, it forms part of the peripheral stalk, linking F(1) to F(0). This chain is ATP synthase subunit b, found in Geobacter sulfurreducens (strain ATCC 51573 / DSM 12127 / PCA).